The sequence spans 186 residues: Putative manganese efflux pump MntP (186 aa).

6 helical membrane-spanning segments follow: residues 3 to 23 (PIAL…AAIG), 39 to 59 (IGII…LIGK), 65 to 85 (VEAW…LHMI), 109 to 129 (CLTA…LAFI), 133 to 153 (IWIA…IGIM), and 166 to 186 (AEIF…YGQL).

Belongs to the MntP (TC 9.B.29) family.

The protein localises to the cell inner membrane. Its function is as follows. Probably functions as a manganese efflux pump. This chain is Putative manganese efflux pump MntP, found in Alcanivorax borkumensis (strain ATCC 700651 / DSM 11573 / NCIMB 13689 / SK2).